The chain runs to 80 residues: Conotoxin SIVB (80 aa).

An N-terminal signal peptide occupies residues 1 to 21 (MGMRMMFTVFLSVVLATTVVS). Positions 22-38 (TPSDRASDGRNAAVHER) are excised as a propeptide. At Gln39 the chain carries Pyrrolidone carboxylic acid. O-linked (HexNAc...) serine glycosylation is present at Ser45. A 4-hydroxyproline mark is found at Pro55, Pro60, Pro61, Pro69, Pro72, and Pro75. Pro75 is subject to Proline amide. A propeptide spanning residues 76 to 80 (GRRND) is cleaved from the precursor.

It belongs to the conotoxin A superfamily. In terms of processing, contains 3 disulfide bonds. Post-translationally, O-linked glycan consists of Hex3-HexNAc2 pentasaccharide. As to expression, expressed by the venom duct.

It is found in the secreted. In terms of biological role, neurotoxin with probable activity on sodium channel. Induces intense repetitive firing of the frog neuromuscular junction, leading to a tetanic contracture in muscle fiber (spastic paralysis). In vivo, shows the same effect as the whole venom when injected on fish prey. This Conus striatus (Striated cone) protein is Conotoxin SIVB.